Consider the following 389-residue polypeptide: Large envelope protein (389 aa).

Residue Met1 is modified to N-acetylmethionine. Gly2 is lipidated: N-myristoyl glycine; by host. The tract at residues Gly2–Ala108 is pre-S1. The pre-S stretch occupies residues Gly2–Asn163. At Gly2–Gly170 the chain is on the virion surface; in external conformation side. Residues Gly2 to Arg242 are Intravirion; in internal conformation-facing. The disordered stretch occupies residues Ile73–Pro99. Positions Met109–Asn163 are pre-S2. The chain crosses the membrane as a helical span at residues Phe171–Ile191. Residues Pro192 to Arg242 lie on the Intravirion; in external conformation side of the membrane. A helical transmembrane segment spans residues Phe243–Tyr263. Topologically, residues Gln264–Ser337 are virion surface. A glycan (N-linked (GlcNAc...) asparagine; by host) is linked at Asn309. A helical transmembrane segment spans residues Leu338–Ile358. Residues Trp359–Trp364 are Intravirion-facing. Residues Gly365–Val387 form a helical membrane-spanning segment. Over Tyr388–Ile389 the chain is Virion surface.

This sequence belongs to the orthohepadnavirus major surface antigen family. In terms of assembly, in its internal form (Li-HBsAg), interacts with the capsid protein and with the isoform S. Interacts with host chaperone CANX. Associates with host chaperone CANX through its pre-S2 N glycan; this association may be essential for isoform M proper secretion. As to quaternary structure, interacts with isoform L. Interacts with the antigens of satellite virus HDV (HDVAgs); this interaction is required for encapsidation of HDV genomic RNA. Post-translationally, isoform M is N-terminally acetylated by host at a ratio of 90%, and N-glycosylated by host at the pre-S2 region. In terms of processing, myristoylated.

It localises to the virion membrane. Its function is as follows. The large envelope protein exists in two topological conformations, one which is termed 'external' or Le-HBsAg and the other 'internal' or Li-HBsAg. In its external conformation the protein attaches the virus to cell receptors and thereby initiating infection. This interaction determines the species specificity and liver tropism. This attachment induces virion internalization predominantly through caveolin-mediated endocytosis. The large envelope protein also assures fusion between virion membrane and endosomal membrane. In its internal conformation the protein plays a role in virion morphogenesis and mediates the contact with the nucleocapsid like a matrix protein. The middle envelope protein plays an important role in the budding of the virion. It is involved in the induction of budding in a nucleocapsid independent way. In this process the majority of envelope proteins bud to form subviral lipoprotein particles of 22 nm of diameter that do not contain a nucleocapsid. This chain is Large envelope protein, found in Gorilla gorilla (western gorilla).